The primary structure comprises 906 residues: Ribonucleoside-diphosphate reductase large subunit-like protein (906 aa).

2 disordered regions span residues M1–T70 and V89–F129. The span at P98–R109 shows a compositional bias: polar residues.

It belongs to the ribonucleoside diphosphate reductase large chain family.

It is found in the virion. The protein localises to the host cytoplasm. In terms of biological role, does not possess a ribonucleotide reductase activity. Betaherpesviruses probably use another strategy to expand the dNTP pool in a quiescent host cell. This Human cytomegalovirus (strain AD169) (HHV-5) protein is Ribonucleoside-diphosphate reductase large subunit-like protein.